The sequence spans 528 residues: GMP synthase [glutamine-hydrolyzing] (528 aa).

Residues 13–204 form the Glutamine amidotransferase type-1 domain; that stretch reads SILILDFGSQ…VYSISKCKAD (192 aa). Catalysis depends on C90, which acts as the Nucleophile. Active-site residues include H178 and E180. Positions 205-403 constitute a GMPS ATP-PPase domain; sequence WNTETFLEET…LGLPDEIIKR (199 aa). Residue 232 to 238 coordinates ATP; the sequence is SGGVDSS.

In terms of assembly, homodimer.

The catalysed reaction is XMP + L-glutamine + ATP + H2O = GMP + L-glutamate + AMP + diphosphate + 2 H(+). Its pathway is purine metabolism; GMP biosynthesis; GMP from XMP (L-Gln route): step 1/1. In terms of biological role, catalyzes the synthesis of GMP from XMP. This Prochlorococcus marinus (strain MIT 9515) protein is GMP synthase [glutamine-hydrolyzing].